The sequence spans 635 residues: 1-deoxy-D-xylulose-5-phosphate synthase (635 aa).

Residues His-78 and 119 to 121 (GHA) contribute to the thiamine diphosphate site. Residue Asp-151 coordinates Mg(2+). Residues 152-153 (GA), Asn-180, and Tyr-291 each bind thiamine diphosphate. Asn-180 provides a ligand contact to Mg(2+). Positions 305-325 (PAFEDRGGTPVTRGSDGRPPY) are disordered. Glu-374 is a binding site for thiamine diphosphate.

The protein belongs to the transketolase family. DXPS subfamily. In terms of assembly, homodimer. Requires Mg(2+) as cofactor. The cofactor is thiamine diphosphate.

The catalysed reaction is D-glyceraldehyde 3-phosphate + pyruvate + H(+) = 1-deoxy-D-xylulose 5-phosphate + CO2. Its pathway is metabolic intermediate biosynthesis; 1-deoxy-D-xylulose 5-phosphate biosynthesis; 1-deoxy-D-xylulose 5-phosphate from D-glyceraldehyde 3-phosphate and pyruvate: step 1/1. Functionally, catalyzes the acyloin condensation reaction between C atoms 2 and 3 of pyruvate and glyceraldehyde 3-phosphate to yield 1-deoxy-D-xylulose-5-phosphate (DXP). This is 1-deoxy-D-xylulose-5-phosphate synthase from Rhodopirellula baltica (strain DSM 10527 / NCIMB 13988 / SH1).